The following is a 90-amino-acid chain: U7-theraphotoxin-Hhn1g (90 aa).

A signal peptide spans 1-19 (MKTAIFTVVLALAVFAVLS). Positions 20-50 (FGWEANEKALSEEFTELIHEKEAASETEARE) are excised as a propeptide. 3 cysteine pairs are disulfide-bonded: Cys51–Cys65, Cys58–Cys70, and Cys64–Cys81.

Belongs to the neurotoxin 10 (Hwtx-1) family. 13 (Hntx-13) subfamily. As to expression, expressed by the venom gland.

It localises to the secreted. Its function is as follows. Ion channel inhibitor. This chain is U7-theraphotoxin-Hhn1g, found in Cyriopagopus hainanus (Chinese bird spider).